The chain runs to 585 residues: Lipoprotein LpqB (585 aa).

A signal peptide spans 1–17 (MGRKLLGLLMLAVLLAG). Cysteine 18 carries N-palmitoyl cysteine lipidation. Cysteine 18 carries S-diacylglycerol cysteine lipidation. 2 disordered regions span residues 24–46 (SSAP…KPTP) and 560–585 (PSAD…VLPG).

The protein belongs to the LpqB lipoprotein family.

It is found in the cell membrane. The polypeptide is Lipoprotein LpqB (Mycobacterium paratuberculosis).